The primary structure comprises 95 residues: Co-chaperonin GroES (95 aa).

It belongs to the GroES chaperonin family. In terms of assembly, heptamer of 7 subunits arranged in a ring. Interacts with the chaperonin GroEL.

It is found in the cytoplasm. Functionally, together with the chaperonin GroEL, plays an essential role in assisting protein folding. The GroEL-GroES system forms a nano-cage that allows encapsulation of the non-native substrate proteins and provides a physical environment optimized to promote and accelerate protein folding. GroES binds to the apical surface of the GroEL ring, thereby capping the opening of the GroEL channel. In Staphylococcus saprophyticus subsp. saprophyticus (strain ATCC 15305 / DSM 20229 / NCIMB 8711 / NCTC 7292 / S-41), this protein is Co-chaperonin GroES.